Consider the following 355-residue polypeptide: Peptide chain release factor 1 (355 aa).

At Gln232 the chain carries N5-methylglutamine. Residues 282–309 (EQNASISAERKSQVGSGDRSERIRTYNY) form a disordered region. Residues 289–305 (AERKSQVGSGDRSERIR) are compositionally biased toward basic and acidic residues.

The protein belongs to the prokaryotic/mitochondrial release factor family. Post-translationally, methylated by PrmC. Methylation increases the termination efficiency of RF1.

It is found in the cytoplasm. Peptide chain release factor 1 directs the termination of translation in response to the peptide chain termination codons UAG and UAA. The chain is Peptide chain release factor 1 from Desulfatibacillum aliphaticivorans.